A 160-amino-acid polypeptide reads, in one-letter code: Prorelaxin (160 aa).

3 cysteine pairs are disulfide-bonded: Cys10/Cys147, Cys22/Cys160, and Cys146/Cys151. Residues 34-133 (QEKQRILGSG…KDFNLNIYSP (100 aa)) constitute a propeptide, connecting peptide.

This sequence belongs to the insulin family. As to quaternary structure, heterodimer of a B chain and an A chain linked by two disulfide bonds. In terms of tissue distribution, expressed in the endometrium during pregnancy and in mammary gland during lactation.

Its subcellular location is the secreted. Its function is as follows. Relaxin is an ovarian hormone that acts with estrogen to produce dilatation of the birth canal in many mammals. It bears mature young, and allows separation of the pelvic bones. This Cavia porcellus (Guinea pig) protein is Prorelaxin (RLN).